The chain runs to 45 residues: Mu-conotoxin-like Cal 12.1.2e (45 aa).

Cystine bridges form between C3–C16, C11–C28, C18–C33, and C27–C39. At W17 the chain carries 6'-bromotryptophan. Position 23 is a 4-hydroxyproline (P23). W38 bears the 6'-bromotryptophan mark. At P40 the chain carries 4-hydroxyproline.

As to expression, expressed by the venom duct.

The protein localises to the secreted. In terms of biological role, mu-conotoxins block voltage-gated sodium channels. This toxin reversibly blocks voltage-gated sodium channel in cephalopods, with no alteration in the voltage dependence of sodium conductance or on the kinetics of inactivation. The polypeptide is Mu-conotoxin-like Cal 12.1.2e (Californiconus californicus (California cone)).